Consider the following 265-residue polypeptide: Palmitoyltransferase ZDHHC21 (265 aa).

Residues 1–16 (MGLRIHFVVDPHGWCC) lie on the Cytoplasmic side of the membrane. Residues 17–37 (MGLIVFVWLYNFFLIPKIVLF) form a helical membrane-spanning segment. Residues 38–44 (PHYEEGH) lie on the Extracellular side of the membrane. Residues 45-65 (IPGILIIIFYGIAMFCLVALV) form a helical membrane-spanning segment. Over 66–133 (RASITDPGRL…NNCVGEDNHW (68 aa)) the chain is Cytoplasmic. The DHHC domain maps to 90–140 (ELCNKCNLMRPKRSHHCSRCGHCVRRMDHHCPWINNCVGEDNHWLFLQLCF). C120 acts as the S-palmitoyl cysteine intermediate in catalysis. The helical transmembrane segment at 134-154 (LFLQLCFYTELLTCYALMFSF) threads the bilayer. Residues 155–185 (CHYYYFLPLKKRNLDLFVVRHELAIMRLAAF) are Extracellular-facing. A helical membrane pass occupies residues 186–206 (MGITMLVGITGLFYTQLIGII). At 207–265 (TDTTSIEKMSNCCEEISRPRKPWQQTFSEVFGTRWKILWFIPFRRRQPLRVPYHFANHV) the chain is on the cytoplasmic side.

Belongs to the DHHC palmitoyltransferase family.

Its subcellular location is the golgi apparatus membrane. The protein localises to the golgi apparatus. It is found in the cis-Golgi network membrane. It localises to the cell membrane. It carries out the reaction L-cysteinyl-[protein] + hexadecanoyl-CoA = S-hexadecanoyl-L-cysteinyl-[protein] + CoA. Its function is as follows. Palmitoyltransferase that catalyzes the addition of palmitate onto various protein substrates. Palmitoylates sex steroid hormone receptors, including ESR1, PGR and AR, thereby regulating their targeting to the plasma membrane. This affects rapid intracellular signaling by sex hormones via ERK and AKT kinases and the generation of cAMP, but does not affect that mediated by their nuclear receptor. Palmitoylates FYN, regulates its localization in hair follicles and plays a key role in epidermal homeostasis and hair follicle differentiation. Through the palmitoylation of PLCB1 and the regulation of PLCB1 downstream signaling may indirectly regulate the function of the endothelial barrier and the adhesion of leukocytes to the endothelium. Also has a palmitoyltransferase activity toward ADRA1D, positively regulating its activity and expression and may thereby play a role in vascular contraction. May also palmitoylate eNOS and LCK. In Bos taurus (Bovine), this protein is Palmitoyltransferase ZDHHC21.